Consider the following 103-residue polypeptide: Matrix Gla protein (103 aa).

Positions 1 to 19 (MKSLLLLSVLAALAVAALC) are cleaved as a signal peptide. Glutamate 21 carries the post-translational modification 4-carboxyglutamate. Residues serine 22, serine 25, and serine 28 each carry the phosphoserine modification. Residues 51–97 (RAKAQERIRELNKPPYELNREACDDYKLCERYAMVYGYNAAYNRYFR) enclose the Gla domain. Residues glutamate 56, glutamate 60, glutamate 67, and glutamate 71 each carry the 4-carboxyglutamate modification. Cysteine 73 and cysteine 79 are disulfide-bonded.

It belongs to the osteocalcin/matrix Gla protein family. In terms of processing, requires vitamin K-dependent gamma-carboxylation for its function.

Its subcellular location is the secreted. In terms of biological role, associates with the organic matrix of bone and cartilage. Thought to act as an inhibitor of bone formation. The polypeptide is Matrix Gla protein (MGP) (Sus scrofa (Pig)).